Reading from the N-terminus, the 459-residue chain is Zeatin O-glucosyltransferase (459 aa).

Residue His26 is the Proton acceptor of the active site. Residue His26 participates in an anthocyanidin binding. The active-site Charge relay is the Asp125. Positions 148, 335, 337, 352, 355, 356, 357, 360, 376, and 377 each coordinate UDP-alpha-D-glucose.

The protein belongs to the UDP-glycosyltransferase family.

It carries out the reaction trans-zeatin + UDP-alpha-D-glucose = O-beta-D-glucosyl-trans-zeatin + UDP + H(+). Its function is as follows. May regulate active versus storage forms of cytokinins, and could have an impact on seed growth. Can also use UDP-xylose to catalyze the formation of O-xylosylzeatin but at much lower affinity. This is Zeatin O-glucosyltransferase from Phaseolus lunatus (Lima bean).